The chain runs to 129 residues: Small ribosomal subunit protein uS11 (129 aa).

It belongs to the universal ribosomal protein uS11 family. Part of the 30S ribosomal subunit. Interacts with proteins S7 and S18. Binds to IF-3.

Located on the platform of the 30S subunit, it bridges several disparate RNA helices of the 16S rRNA. Forms part of the Shine-Dalgarno cleft in the 70S ribosome. The chain is Small ribosomal subunit protein uS11 from Psychrobacter arcticus (strain DSM 17307 / VKM B-2377 / 273-4).